A 448-amino-acid polypeptide reads, in one-letter code: Adenylyltransferase and sulfurtransferase UBA4 (448 aa).

ATP contacts are provided by residues G88, D109, 116–120, K133, and 177–178; these read SNLHR and DT. The Zn(2+) site is built by C219 and C222. The active-site Glycyl thioester intermediate; for adenylyltransferase activity is C236. Zn(2+) contacts are provided by C297 and C300. The Rhodanese domain maps to 349–446; the sequence is QGENSILIDV…WSKEIDSKIP (98 aa). Catalysis depends on C405, which acts as the Cysteine persulfide intermediate; for sulfurtransferase activity.

It in the N-terminal section; belongs to the HesA/MoeB/ThiF family. UBA4 subfamily. Zn(2+) is required as a cofactor.

Its subcellular location is the cytoplasm. It localises to the cytosol. Its pathway is tRNA modification; 5-methoxycarbonylmethyl-2-thiouridine-tRNA biosynthesis. Functionally, plays a central role in 2-thiolation of mcm(5)S(2)U at tRNA wobble positions of cytosolic tRNA(Lys), tRNA(Glu) and tRNA(Gln). Acts by mediating the C-terminal thiocarboxylation of sulfur carrier URM1. Its N-terminus first activates URM1 as acyl-adenylate (-COAMP), then the persulfide sulfur on the catalytic cysteine is transferred to URM1 to form thiocarboxylation (-COSH) of its C-terminus. The reaction probably involves hydrogen sulfide that is generated from the persulfide intermediate and that acts as a nucleophile towards URM1. Subsequently, a transient disulfide bond is formed. Does not use thiosulfate as sulfur donor; NFS1 probably acting as a sulfur donor for thiocarboxylation reactions. Prior mcm(5) tRNA modification by the elongator complex is required for 2-thiolation. May also be involved in protein urmylation. This is Adenylyltransferase and sulfurtransferase UBA4 from Debaryomyces hansenii (strain ATCC 36239 / CBS 767 / BCRC 21394 / JCM 1990 / NBRC 0083 / IGC 2968) (Yeast).